Here is a 443-residue protein sequence, read N- to C-terminus: Serine--tRNA ligase (443 aa).

Residue threonine 246–glutamate 248 participates in L-serine binding. Arginine 277–glutamate 279 lines the ATP pocket. Glutamate 300 contributes to the L-serine binding site. Residue glutamate 367 to serine 370 coordinates ATP. Serine 402 is an L-serine binding site.

The protein belongs to the class-II aminoacyl-tRNA synthetase family. Type-1 seryl-tRNA synthetase subfamily. In terms of assembly, homodimer. The tRNA molecule binds across the dimer.

Its subcellular location is the cytoplasm. The catalysed reaction is tRNA(Ser) + L-serine + ATP = L-seryl-tRNA(Ser) + AMP + diphosphate + H(+). It catalyses the reaction tRNA(Sec) + L-serine + ATP = L-seryl-tRNA(Sec) + AMP + diphosphate + H(+). The protein operates within aminoacyl-tRNA biosynthesis; selenocysteinyl-tRNA(Sec) biosynthesis; L-seryl-tRNA(Sec) from L-serine and tRNA(Sec): step 1/1. Catalyzes the attachment of serine to tRNA(Ser). Is also able to aminoacylate tRNA(Sec) with serine, to form the misacylated tRNA L-seryl-tRNA(Sec), which will be further converted into selenocysteinyl-tRNA(Sec). The chain is Serine--tRNA ligase from Bradyrhizobium diazoefficiens (strain JCM 10833 / BCRC 13528 / IAM 13628 / NBRC 14792 / USDA 110).